A 106-amino-acid chain; its full sequence is MIAEQIFIIILVLTVLHTAIERIAKRSLSYSNVNYTYTQSISFLVGYTIVYIIMSHISHAVIISIMIMISYAIYIVIKMRNNQQIQNDIEMFMFGMIAGLGIEIVG.

This is an uncharacterized protein from Thermoproteus tenax virus 1 (strain KRA1) (TTV1).